The chain runs to 468 residues: Mannan endo-1,4-beta-mannosidase 3 (468 aa).

The first 23 residues, 1–23 (MTVRPRPAAAAIIIAAVFGAAAA), serve as a signal peptide directing secretion. Tryptophan 86 contacts substrate. Asparagine 152 is a glycosylation site (N-linked (GlcNAc...) asparagine). Residue asparagine 201 coordinates substrate. The active-site Proton donor is the glutamate 202. Residue tyrosine 281 coordinates substrate. A glycan (N-linked (GlcNAc...) asparagine) is linked at asparagine 300. Catalysis depends on glutamate 321, which acts as the Nucleophile. The N-linked (GlcNAc...) asparagine glycan is linked to asparagine 333. Residues tryptophan 364 and aspartate 371 each coordinate substrate. The interval 415-436 (LRRRRRRPASSHRKTRLGSGGD) is disordered. Positions 416–430 (RRRRRRPASSHRKTR) are enriched in basic residues.

This sequence belongs to the glycosyl hydrolase 5 (cellulase A) family. In terms of tissue distribution, expressed in seeds.

Its subcellular location is the secreted. It catalyses the reaction Random hydrolysis of (1-&gt;4)-beta-D-mannosidic linkages in mannans, galactomannans and glucomannans.. In Oryza sativa subsp. japonica (Rice), this protein is Mannan endo-1,4-beta-mannosidase 3 (MAN3).